Reading from the N-terminus, the 611-residue chain is Leukotriene A-4 hydrolase (611 aa).

Lys73 carries the post-translational modification N6-acetyllysine. Residues 135–137 (QCQ) and 267–272 (PYGGME) each bind a peptide. Residue His296 coordinates Zn(2+). Glu297 functions as the Proton acceptor in the catalytic mechanism. 2 residues coordinate Zn(2+): His300 and Glu319. At Lys337 the chain carries N6-acetyllysine. The active-site Proton donor is Tyr384. At Lys414 the chain carries N6-acetyllysine. Ser416 is modified (phosphoserine). 564 to 566 (RMK) is a binding site for a peptide. N6-acetyllysine is present on Lys573.

It belongs to the peptidase M1 family. In terms of assembly, monomer. It depends on Zn(2+) as a cofactor. Phosphorylation at Ser-416 inhibits leukotriene-A4 hydrolase activity. activity.

The protein resides in the cytoplasm. The enzyme catalyses leukotriene A4 + H2O = leukotriene B4. It carries out the reaction (5S,6S)-epoxy-(18R)-hydroxy-(7E,9E,11Z,14Z,16E)-eicosapentaenoate + H2O = resolvin E1. The catalysed reaction is (5S,6S)-epoxy-(18S)-hydroxy-(7E,9E,11Z,14Z,16E)-eicosapentaenoate + H2O = 18S-resolvin E1. It catalyses the reaction Release of the N-terminal residue from a tripeptide.. Its pathway is lipid metabolism; leukotriene B4 biosynthesis. Inhibited by bestatin. The epoxide hydrolase activity is restrained by suicide inactivation that involves binding of LTA4 to Tyr-379. 4-(4-benzylphenyl)thiazol-2-amine (ARM1) selectively inhibits the epoxide hydrolase activity. Its function is as follows. Bifunctional zinc metalloenzyme that comprises both epoxide hydrolase (EH) and aminopeptidase activities. Acts as an epoxide hydrolase to catalyze the conversion of LTA4 to the pro-inflammatory mediator leukotriene B4 (LTB4). Also has aminopeptidase activity, with high affinity for N-terminal arginines of various synthetic tripeptides. In addition to its pro-inflammatory EH activity, may also counteract inflammation by its aminopeptidase activity, which inactivates by cleavage another neutrophil attractant, the tripeptide Pro-Gly-Pro (PGP), a bioactive fragment of collagen generated by the action of matrix metalloproteinase-9 (MMP9) and prolylendopeptidase (PREPL). Involved also in the biosynthesis of resolvin E1 and 18S-resolvin E1 from eicosapentaenoic acid, two lipid mediators that show potent anti-inflammatory and pro-resolving actions. The polypeptide is Leukotriene A-4 hydrolase (LTA4H) (Bos taurus (Bovine)).